Consider the following 265-residue polypeptide: Small ribosomal subunit protein uS2 (265 aa).

Belongs to the universal ribosomal protein uS2 family.

The chain is Small ribosomal subunit protein uS2 from Aliarcobacter butzleri (strain RM4018) (Arcobacter butzleri).